We begin with the raw amino-acid sequence, 509 residues long: Cobyric acid synthase (509 aa).

A GATase cobBQ-type domain is found at 262 to 459 (ELKVGIIKLP…IHGIFENDDW (198 aa)). Cys343 serves as the catalytic Nucleophile. The active site involves His451.

This sequence belongs to the CobB/CobQ family. CobQ subfamily.

It participates in cofactor biosynthesis; adenosylcobalamin biosynthesis. Its function is as follows. Catalyzes amidations at positions B, D, E, and G on adenosylcobyrinic A,C-diamide. NH(2) groups are provided by glutamine, and one molecule of ATP is hydrogenolyzed for each amidation. This is Cobyric acid synthase from Prochlorococcus marinus subsp. pastoris (strain CCMP1986 / NIES-2087 / MED4).